Consider the following 100-residue polypeptide: Small ribosomal subunit protein uS14c (100 aa).

It belongs to the universal ribosomal protein uS14 family. Part of the 30S ribosomal subunit.

Its subcellular location is the plastid. It localises to the chloroplast. Functionally, binds 16S rRNA, required for the assembly of 30S particles. In Gracilaria tenuistipitata var. liui (Red alga), this protein is Small ribosomal subunit protein uS14c.